The primary structure comprises 2073 residues: Histone acetyltransferase KAT6B (2073 aa).

Positions 1–77 (MVKLANPLYT…LASYKDPDNP (77 aa)) constitute an SAMD1-like winged helix (WH) domain. A disordered region spans residues 72–97 (KDPDNPGRFSSVKPGTFPKSAKGSRG). Residues 103 to 176 (RNVDWNKLLR…KDGPQYRVNY (74 aa)) enclose the H15 domain. PHD-type zinc fingers lie at residues 213 to 272 (IPIC…CKTC) and 269 to 320 (CKTC…CRPK). Residue S355 is modified to Phosphoserine. 4 disordered regions span residues 360–409 (EGSM…RPGA), 442–531 (FTPS…VPSL), 553–583 (TQGQ…TAKS), and 639–663 (VTPQ…PDQD). The interval 361 to 717 (GSMNAFTGRG…ECESGVEDCG (357 aa)) is negatively regulates HAT activity. Positions 379–399 (KVCTTPSSGHAASGKDSSSRL) are enriched in polar residues. The segment covering 447–460 (DGRRSRGEIIDFSK) has biased composition (basic and acidic residues). Residues 470–485 (QKQSCTSHVLATGTTQ) show a composition bias toward polar residues. The segment covering 488 to 499 (KPPPSSLPPPTP) has biased composition (pro residues). Positions 501-531 (SGQSPSSQKSSTATSSPSPQSSSSQCSVPSL) are enriched in low complexity. At S647 the chain carries Phosphoserine. K673 is covalently cross-linked (Glycyl lysine isopeptide (Lys-Gly) (interchain with G-Cter in SUMO2)). The region spanning 715–989 (DCGRYPSVIE…LDPDSLRWTP (275 aa)) is the MYST-type HAT domain. The segment at 718–1008 (RYPSVIEFGK…EEEREAEKEA (291 aa)) is catalytic. The C2HC MYST-type zinc finger occupies 748 to 773 (LYLCEFCLKYMKSKNILLRHSKKCGW). Positions 752-1008 (EFCLKYMKSK…EEEREAEKEA (257 aa)) are interaction with BRPF1. At K815 the chain carries N6-acetyllysine; by autocatalysis. Residues 856 to 860 (SCIMI) and 865 to 871 (QRQGFGR) contribute to the acetyl-CoA site. E891 functions as the Proton donor/acceptor in the catalytic mechanism. An acetyl-CoA-binding site is contributed by S895. Disordered stretches follow at residues 1022–1452 (EQEI…FKEV), 1484–1538 (SCNS…MEID), and 1580–1619 (QSPQ…SPSV). Residues 1025 to 1043 (ILSTRANSRQSPAKVQSKN) are compositionally biased toward polar residues. N6-acetyllysine is present on residues K1038, K1042, and K1044. S1048 bears the Phosphoserine mark. Over residues 1069 to 1105 (SEEEEEEEDEEEEEEEEEEEEDEEEEEEEEEEEEEEN) the composition is skewed to acidic residues. The span at 1106–1117 (IQSSPPRLTKPQ) shows a compositional bias: polar residues. A compositionally biased stretch (basic residues) spans 1121-1140 (IKRKRPFVLKKKRGRKRRRI). Residues 1142–1155 (SSVTTETISETTEV) are compositionally biased toward low complexity. A compositionally biased stretch (basic residues) spans 1187–1200 (PVLRKAFQHQPGKK). 3 stretches are compositionally biased toward basic and acidic residues: residues 1229–1243 (SNLK…EPLK), 1306–1315 (RIEEEVKETG), and 1341–1350 (EKPEDDLIKP). Positions 1351–1374 (EEEEEEEEEEEEEEEEEEGEEEEG) are enriched in acidic residues. Basic and acidic residues-rich tracts occupy residues 1378-1390 (VEKD…SQEK) and 1396-1407 (STEKEDSARLDD). The span at 1408-1417 (HEEEEEEDEE) shows a compositional bias: acidic residues. Basic and acidic residues predominate over residues 1433–1452 (HMESAEVEKEELPRESFKEV). Residues 1498–1507 (AVPESDEEPP) are compositionally biased toward acidic residues. Residues 1513 to 1529 (QKQDQKNSKEVDTEFKE) are compositionally biased toward basic and acidic residues. The interval 1560–2073 (QDCAETQEAC…QSLNGSYMRR (514 aa)) is interaction with RUNX1 and RUNX2. Residues 1580–1591 (QSPQIATTLDDC) are compositionally biased toward polar residues. Residues 1594–1611 (SDHSSPVSSVHSHPGQSV) show a composition bias toward low complexity.

The protein belongs to the MYST (SAS/MOZ) family. In terms of assembly, component of the MOZ/MORF complex composed at least of ING5, KAT6A, KAT6B, MEAF6 and one of BRPF1, BRD1/BRPF2 and BRPF3. Interacts with RUNX1 and RUNX2. In terms of processing, autoacetylated. Autoacetylation at Lys-815 is required for proper function. Ubiquitously expressed, with high levels in heart, pancreas, testis and ovary.

The protein localises to the nucleus. It carries out the reaction L-lysyl-[protein] + acetyl-CoA = N(6)-acetyl-L-lysyl-[protein] + CoA + H(+). In terms of biological role, histone acetyltransferase which may be involved in both positive and negative regulation of transcription. Required for RUNX2-dependent transcriptional activation. May be involved in cerebral cortex development. Component of the MOZ/MORF complex which has a histone H3 acetyltransferase activity. The chain is Histone acetyltransferase KAT6B (KAT6B) from Homo sapiens (Human).